Here is a 398-residue protein sequence, read N- to C-terminus: Thyrotropin-releasing hormone receptor (398 aa).

Topologically, residues 1-28 are extracellular; sequence MENETVSELNQTQLQPRAVVALEYQVVT. N-linked (GlcNAc...) asparagine glycans are attached at residues Asn-3 and Asn-10. The chain crosses the membrane as a helical span at residues 29–51; sequence ILLVLIICGLGIVGNIMVVLVVM. At 52–61 the chain is on the cytoplasmic side; it reads RTKHMRTPTN. Residues 62–83 traverse the membrane as a helical segment; that stretch reads CYLVSLAVADLMVLVAAGLPNI. The Extracellular segment spans residues 84-99; the sequence is TDSIYGSWVYGYVGCL. A disulfide bridge links Cys-98 with Cys-179. The chain crosses the membrane as a helical span at residues 100 to 121; sequence CITYLQYLGINASSCSITAFTI. Topologically, residues 122–144 are cytoplasmic; the sequence is ERYIAICHPIKAQFLCTFSRAKK. A helical membrane pass occupies residues 145-168; sequence IIIFVWAFTSLYCMLWFFLLDLNI. Topologically, residues 169–193 are extracellular; sequence STYKDAIVISCGYKISRNYYSPIYL. The chain crosses the membrane as a helical span at residues 194–215; the sequence is MDFGVFYVVPMILATVLYGFIA. Over 216–266 the chain is Cytoplasmic; it reads RILFLNPIPSDPKENSKTWKNDSTHQNTNLNVNTSNRCFNSTVSSRKQVTK. Residues 267–288 traverse the membrane as a helical segment; that stretch reads MLAVVVILFALLWMPYRTLVVV. Residues 289–296 lie on the Extracellular side of the membrane; sequence NSFLSSPF. Residues 297–319 form a helical membrane-spanning segment; that stretch reads QENWFLLFCRICIYLNSAINPVI. Residues 320 to 398 are Cytoplasmic-facing; the sequence is YNLMSQKFRA…LASEVSFSQS (79 aa).

It belongs to the G-protein coupled receptor 1 family.

It localises to the cell membrane. Its function is as follows. Receptor for thyrotropin-releasing hormone (TRH). Upon ligand binding, this G-protein-coupled receptor triggers activation of the phosphatidylinositol (IP3)-calcium-protein kinase C (PKC) pathway. The chain is Thyrotropin-releasing hormone receptor (TRHR) from Homo sapiens (Human).